Consider the following 129-residue polypeptide: Small ribosomal subunit protein uS11 (129 aa).

It belongs to the universal ribosomal protein uS11 family. In terms of assembly, part of the 30S ribosomal subunit. Interacts with proteins S7 and S18. Binds to IF-3.

Its function is as follows. Located on the platform of the 30S subunit, it bridges several disparate RNA helices of the 16S rRNA. Forms part of the Shine-Dalgarno cleft in the 70S ribosome. The chain is Small ribosomal subunit protein uS11 from Desulforamulus reducens (strain ATCC BAA-1160 / DSM 100696 / MI-1) (Desulfotomaculum reducens).